Consider the following 84-residue polypeptide: Delta-stichotoxin-Shd3a (84 aa).

The first 19 residues, 1–19 (MAYLKIVLVALMLVLGVSA), serve as a signal peptide directing secretion. The propeptide occupies 20–33 (MRLSDQEDQDVSVV). 3 disulfide bridges follow: C38–C78, C40–C68, and C61–C79. A Lysine amide modification is found at K83.

The protein belongs to the sea anemone sodium channel inhibitory toxin family. Type II subfamily.

It localises to the secreted. The protein localises to the nematocyst. Binds specifically to voltage-gated sodium channels (Nav), thereby delaying their inactivation during signal transduction. The chain is Delta-stichotoxin-Shd3a from Stichodactyla haddoni (Saddle carpet anemone).